The primary structure comprises 183 residues: NAD(P)H-quinone oxidoreductase subunit I, chloroplastic (183 aa).

2 4Fe-4S ferredoxin-type domains span residues 55 to 84 (GRIHFEFDKCIACEVCVRVCPINLPVVDWE) and 95 to 124 (TSYSIDFGVCIFCGNCVEYCPTNCLSMTEE). The [4Fe-4S] cluster site is built by C64, C67, C70, C74, C104, C107, C110, and C114.

It belongs to the complex I 23 kDa subunit family. In terms of assembly, NDH is composed of at least 16 different subunits, 5 of which are encoded in the nucleus. [4Fe-4S] cluster is required as a cofactor.

Its subcellular location is the plastid. It localises to the chloroplast thylakoid membrane. The catalysed reaction is a plastoquinone + NADH + (n+1) H(+)(in) = a plastoquinol + NAD(+) + n H(+)(out). It carries out the reaction a plastoquinone + NADPH + (n+1) H(+)(in) = a plastoquinol + NADP(+) + n H(+)(out). In terms of biological role, NDH shuttles electrons from NAD(P)H:plastoquinone, via FMN and iron-sulfur (Fe-S) centers, to quinones in the photosynthetic chain and possibly in a chloroplast respiratory chain. The immediate electron acceptor for the enzyme in this species is believed to be plastoquinone. Couples the redox reaction to proton translocation, and thus conserves the redox energy in a proton gradient. The sequence is that of NAD(P)H-quinone oxidoreductase subunit I, chloroplastic from Huperzia lucidula (Shining clubmoss).